Consider the following 37-residue polypeptide: Large ribosomal subunit protein bL36 (37 aa).

Belongs to the bacterial ribosomal protein bL36 family.

In Prochlorococcus marinus (strain MIT 9303), this protein is Large ribosomal subunit protein bL36.